The chain runs to 1311 residues: Clustered mitochondria protein homolog (1311 aa).

The segment at 1-46 is disordered; that stretch reads MAATNEVIPTSENPSDVSGSSQKLATEETALANGVDHEEEDSGEAG. Positions 7 to 24 are enriched in polar residues; sequence VIPTSENPSDVSGSSQKL. The Clu domain occupies 335-579; sequence DITRTQENYL…RVTPLDITWM (245 aa). Disordered stretches follow at residues 629–691 and 915–965; these read ERKR…QERI and QSQT…VNAS. Residues 655–691 are compositionally biased toward basic and acidic residues; the sequence is EASKSDEPTENGELAKKADESDKDAEPSKPAADQERI. The segment covering 915–930 has biased composition (polar residues); sequence QSQTEAAAAPPTTNGE. TPR repeat units follow at residues 1034 to 1067, 1076 to 1109, and 1118 to 1151; these read ARVY…SERT, LLNY…WKVV, and ITTI…CEEV. Residues 1236–1311 form a disordered region; the sequence is VSPRVTLGQT…RGGAAAAAGK (76 aa). The span at 1242–1253 shows a compositional bias: polar residues; that stretch reads LGQTQLQPQVGQ. The segment covering 1259 to 1279 has biased composition (basic and acidic residues); it reads AGRDSRSSRGLDSRSIDELLK. Basic residues predominate over residues 1289–1303; that stretch reads KNKKRPGRSNPKRRG.

This sequence belongs to the CLU family. May associate with the eukaryotic translation initiation factor 3 (eIF-3) complex.

The protein localises to the cytoplasm. In terms of biological role, mRNA-binding protein involved in proper cytoplasmic distribution of mitochondria. In Sclerotinia sclerotiorum (strain ATCC 18683 / 1980 / Ss-1) (White mold), this protein is Clustered mitochondria protein homolog.